The following is a 372-amino-acid chain: Ligninase C (372 aa).

Positions 1-26 (MAFKSLLSFVSVIGALQGANAALTRR) are cleaved as a signal peptide. Residue H74 is the Proton acceptor of the active site. D75, G93, D95, and S97 together coordinate Ca(2+). N129 carries an N-linked (GlcNAc...) asparagine glycan. Residue H205 participates in heme b binding. Positions 206, 223, 225, 228, and 230 each coordinate Ca(2+). Residues 346–372 (TPFPTFPTDPGPKTAVAPVPKPPAARK) are disordered.

The protein belongs to the peroxidase family. Ligninase subfamily. Ca(2+) is required as a cofactor. Heme b serves as cofactor.

The enzyme catalyses 1-(3,4-dimethoxyphenyl)-2-(2-methoxyphenoxy)propane-1,3-diol + H2O2 = 3,4-dimethoxybenzaldehyde + guaiacol + glycolaldehyde + H2O. It catalyses the reaction 2 (3,4-dimethoxyphenyl)methanol + H2O2 = 2 (3,4-dimethoxyphenyl)methanol radical + 2 H2O. The protein operates within secondary metabolite metabolism; lignin degradation. Functionally, depolymerization of lignin. Catalyzes the C(alpha)-C(beta) cleavage of the propyl side chains of lignin. The polypeptide is Ligninase C (Trametes versicolor (White-rot fungus)).